Consider the following 277-residue polypeptide: Diaminopimelate epimerase (277 aa).

N13, Q46, and N66 together coordinate substrate. C75 serves as the catalytic Proton donor. Residues 76 to 77 (GN), N160, N193, and 211 to 212 (ER) each bind substrate. C220 acts as the Proton acceptor in catalysis. Substrate is bound at residue 221-222 (GS).

Belongs to the diaminopimelate epimerase family. In terms of assembly, homodimer.

The protein resides in the cytoplasm. It carries out the reaction (2S,6S)-2,6-diaminopimelate = meso-2,6-diaminopimelate. Its pathway is amino-acid biosynthesis; L-lysine biosynthesis via DAP pathway; DL-2,6-diaminopimelate from LL-2,6-diaminopimelate: step 1/1. Its function is as follows. Catalyzes the stereoinversion of LL-2,6-diaminopimelate (L,L-DAP) to meso-diaminopimelate (meso-DAP), a precursor of L-lysine and an essential component of the bacterial peptidoglycan. The protein is Diaminopimelate epimerase of Legionella pneumophila (strain Corby).